Consider the following 557-residue polypeptide: MAYSEEHKGMPCGFIRQNSGNSISLDFEPSIEYQFVERLEERYKCAFCHSVLHNPHQTGCGHRFCQHCILSLRELNTVPICPVDKEVIKSQEVFKDNCCKREVLNLYVYCSNAPGCNAKVILGRYQDHLQQCLFQPVQCSNEKCREPVLRKDLKEHLSASCQFRKEKCLYCKKDVVVINLQNHEENLCPEYPVFCPNNCAKIILKTEVDEHLAVCPEAEQDCPFKHYGCAVTDKRRNLQQHEHSALREHMRLVLEKNVQLEEQISDLHKSLEQKESKIQQLAETIKKLEKEFKQFAQLFGKNGSFLPNIQVFASHIDKSAWLEAQVHQLLQMVNQQQNKFDLRPLMEAVDTVKQKITLLENNDQRLAVLEEETNKHDTHINIHKAQLSKNEERFKLLEGTCYNGKLIWKVTDYKMKKREAVDGHTVSIFSQSFYTSRCGYRLCARAYLNGDGSGRGSHLSLYFVVMRGEFDSLLQWPFRQRVTLMLLDQSGKKNIMETFKPDPNSSSFKRPDGEMNIASGCPRFVAHSVLENAKNAYIKDDTLFLKVAVDLTDLEDL.

The RING-type zinc-finger motif lies at 45 to 85 (CAFCHSVLHNPHQTGCGHRFCQHCILSLRELNTVPICPVDK). 2 consecutive TRAF-type zinc fingers follow at residues 127-181 (DHLQ…INLQ) and 182-239 (NHEE…RNLQ). The stretch at 237–342 (NLQQHEHSAL…VNQQQNKFDL (106 aa)) forms a coiled coil. Residue Lys-318 forms a Glycyl lysine isopeptide (Lys-Gly) (interchain with G-Cter in ubiquitin) linkage. An interaction with EIF2AK2/PKR region spans residues 345 to 557 (LMEAVDTVKQ…AVDLTDLEDL (213 aa)). Residues 403–549 (NGKLIWKVTD…DDTLFLKVAV (147 aa)) form the MATH domain.

Belongs to the TNF receptor-associated factor family. A subfamily. In terms of assembly, homotrimer. Heteromer with TRAF3. Associates with TNFRSF5/CD40 through interaction with TRAF3. Associates with LTBR/TNFRSF3, TNFRSF4, TNFRSF8/CD30, TNFRSF11A/RANK, TNFRSF13B/TACI, TNFRSF14, TNFRSF17, TNFRSF19/TROY, RIPK2, MAP3K14, MAP3K5, and TRAF and TNF receptor associated protein TDP2. Interacts (via C-terminus) with EIF2AK2/PKR (via the kinase catalytic domain). Post-translationally, ubiquitinated at Lys-318 by the SCF(FBXL2) complex, leading to its degradation by the proteasome. In terms of tissue distribution, expressed in spleen, thymus, prostate, testis, ovary, small intestine, colon, and peripheral blood.

The protein resides in the cytoplasm. It is found in the cytosol. In terms of biological role, adapter protein and signal transducer that links members of the tumor necrosis factor receptor family to different signaling pathways by association with the receptor cytoplasmic domain and kinases. Mediates activation of NF-kappa-B and probably JNK. Seems to be involved in apoptosis. Plays a role in mediating activation of NF-kappa-B by EIF2AK2/PKR. The sequence is that of TNF receptor-associated factor 5 (TRAF5) from Homo sapiens (Human).